Consider the following 571-residue polypeptide: MCAPGYHRFWFHWGLLLLLLLEAPLRGLALPPIRYSHAGICPNDMNPNLWVDAQSTCKRECETDQECETYEKCCPNVCGTKSCVAARYMDVKGKKGPVGMPKEATCDHFMCLQQGSECDIWDGQPVCKCKDRCEKEPSFTCASDGLTYYNRCFMDAEACSKGITLSVVTCRYHFTWPNTSPPPPETTVHPTTASPETLGLDMAAPALLNHPVHQSVTVGETVSFLCDVVGRPRPELTWEKQLEDRENVVMRPNHVRGNVVVTNIAQLVIYNVQPQDAGIYTCTARNVAGVLRADFPLSVVRGGQARATSESSLNGTAFPATECLKPPDSEDCGEEQTRWHFDAQANNCLTFTFGHCHHNLNHFETYEACMLACMSGPLAICSLPALQGPCKAYVPRWAYNSQTGLCQSFVYGGCEGNGNNFESREACEESCPFPRGNQHCRACKPRQKLVTSFCRSDFVILGRVSELTEEQDSGRALVTVDEVLKDEKMGLKFLGREPLEVTLLHVDWTCPCPNVTVGETPLIIMGEVDGGMAMLRPDSFVGASSTRRVRKLREVMYKKTCDVLKDFLGLQ.

The signal sequence occupies residues Met1–Ala29. The WAP domain maps to Arg34–Arg87. Intrachain disulfides connect Cys41/Cys74, Cys57/Cys78, Cys61/Cys73, Cys67/Cys83, Cys129/Cys159, Cys133/Cys152, Cys141/Cys170, and Cys226/Cys282. The region spanning Trp121 to Tyr172 is the Kazal-like domain. In terms of domain architecture, Ig-like C2-type spans Pro205 to Ser298. An N-linked (GlcNAc...) asparagine glycan is attached at Asn314. 9 disulfide bridges follow: Cys323/Cys373, Cys332/Cys356, Cys348/Cys369, Cys381/Cys431, Cys390/Cys414, Cys406/Cys427, Cys440/Cys510, Cys443/Cys512, and Cys454/Cys561. 2 consecutive BPTI/Kunitz inhibitor domains span residues Cys323–Cys373 and Cys381–Cys431. The NTR domain occupies Cys440–Cys561. Asn514 carries N-linked (GlcNAc...) asparagine glycosylation.

Belongs to the WFIKKN family. In terms of assembly, interacts with both mature and propeptide myostatin/MSTN. Widely expressed, with high expression in skeletal muscle and heart. Also expressed in brain, lung and testis. Weakly expressed in liver and kidney.

It is found in the secreted. Functionally, protease-inhibitor that contains multiple distinct protease inhibitor domains. Probably has serine protease- and metalloprotease-inhibitor activity. Inhibits the biological activity of mature myostatin, but not activin. The sequence is that of WAP, Kazal, immunoglobulin, Kunitz and NTR domain-containing protein 2 (Wfikkn2) from Mus musculus (Mouse).